Consider the following 334-residue polypeptide: Ornithine carbamoyltransferase (334 aa).

Residues 56-59 (STRT), Q83, R107, and 134-137 (HPTQ) contribute to the carbamoyl phosphate site. L-ornithine is bound by residues N168, D232, and 236–237 (SM). Residues 274 to 275 (CL) and R320 each bind carbamoyl phosphate.

This sequence belongs to the aspartate/ornithine carbamoyltransferase superfamily. OTCase family.

It localises to the cytoplasm. The enzyme catalyses carbamoyl phosphate + L-ornithine = L-citrulline + phosphate + H(+). It functions in the pathway amino-acid biosynthesis; L-arginine biosynthesis; L-arginine from L-ornithine and carbamoyl phosphate: step 1/3. Functionally, reversibly catalyzes the transfer of the carbamoyl group from carbamoyl phosphate (CP) to the N(epsilon) atom of ornithine (ORN) to produce L-citrulline. The chain is Ornithine carbamoyltransferase from Escherichia coli (strain 55989 / EAEC).